The chain runs to 317 residues: Putative methyltransferase YMR310C (317 aa).

S190 carries the post-translational modification Phosphoserine.

It belongs to the class IV-like SAM-binding methyltransferase superfamily.

It is found in the nucleus. This chain is Putative methyltransferase YMR310C, found in Saccharomyces cerevisiae (strain ATCC 204508 / S288c) (Baker's yeast).